Consider the following 129-residue polypeptide: Large ribosomal subunit protein bL17 (129 aa).

This sequence belongs to the bacterial ribosomal protein bL17 family. Part of the 50S ribosomal subunit. Contacts protein L32.

The protein is Large ribosomal subunit protein bL17 of Polynucleobacter asymbioticus (strain DSM 18221 / CIP 109841 / QLW-P1DMWA-1) (Polynucleobacter necessarius subsp. asymbioticus).